Here is a 145-residue protein sequence, read N- to C-terminus: MVANTSMRLNQVAPVPIQLEDHGPNQLEPTHISDVLVGEHHTIKGENGQSYVVWAIRIIVNDSIYSSIVLYKRYREMEAFRNKLLDEFGNEIPPLPPKDSMSLQKLTNPLAWLEERRKGLQWFMTNVLLNPRWQRSTVVREFVLG.

Residues 32–145 (ISDVLVGEHH…STVVREFVLG (114 aa)) enclose the PX domain.

This sequence belongs to the YPT35 family.

Its subcellular location is the endosome membrane. The protein resides in the vacuole membrane. Functionally, recruits the lipid transfer protein VPS13 to endosomal and vacuolar membranes. The chain is Endosomal/vacuolar adapter protein YPT35 (YPT35) from Meyerozyma guilliermondii (strain ATCC 6260 / CBS 566 / DSM 6381 / JCM 1539 / NBRC 10279 / NRRL Y-324) (Yeast).